The primary structure comprises 558 residues: Type I restriction enzyme MjaIX methylase subunit (558 aa).

The tract at residues 1–37 is disordered; that stretch reads MATLDKFLSIKENDEKTKKKESKKKSSKSNKTSESLV. Residues 8–18 show a composition bias toward basic and acidic residues; the sequence is LSIKENDEKTK. Over residues 19–28 the composition is skewed to basic residues; that stretch reads KKESKKKSSK. Residues 227 to 232, 256 to 258, and Asp283 each bind S-adenosyl-L-methionine; these read KFYTPR and SGG.

The protein belongs to the N(4)/N(6)-methyltransferase family. The type I restriction/modification system is composed of three polypeptides R, M and S.

It carries out the reaction a 2'-deoxyadenosine in DNA + S-adenosyl-L-methionine = an N(6)-methyl-2'-deoxyadenosine in DNA + S-adenosyl-L-homocysteine + H(+). Its function is as follows. The subtype gamma methyltransferase (M) subunit of a type I restriction enzyme. The M and S subunits together form a methyltransferase (MTase) that methylates A-3 on the top and A-2 on the bottom strand of the sequence 5'-CCAN(5)GTR-3'. In the presence of the R subunit the complex can also act as an endonuclease, binding to the same target sequence but cutting the DNA some distance from this site. Whether the DNA is cut or modified depends on the methylation state of the target sequence. When the target site is unmodified, the DNA is cut. When the target site is hemimethylated, the complex acts as a maintenance MTase modifying the DNA so that both strands become methylated. After locating a non-methylated recognition site, the enzyme complex serves as a molecular motor that translocates DNA in an ATP-dependent manner until a collision occurs that triggers cleavage. The protein is Type I restriction enzyme MjaIX methylase subunit of Methanocaldococcus jannaschii (strain ATCC 43067 / DSM 2661 / JAL-1 / JCM 10045 / NBRC 100440) (Methanococcus jannaschii).